Reading from the N-terminus, the 317-residue chain is UV DNA damage endonuclease (317 aa).

It belongs to the uve1/UvsE family.

In terms of biological role, component in a DNA repair pathway. Removal of UV LIGHT damaged nucleotides. Recognizes pyrimidine dimers and cleave a phosphodiester bond immediately 5' to the lesion. This Bacillus cereus (strain ATCC 10987 / NRS 248) protein is UV DNA damage endonuclease.